Reading from the N-terminus, the 351-residue chain is Secreted frizzled-related sequence protein 4 (351 aa).

The N-terminal stretch at 1 to 18 (MLRSILVALCLWLRLALG) is a signal peptide. Residues 19–139 (VRGAPCEAVR…VYDRGVCISP (121 aa)) enclose the FZ domain. Disulfide bonds link C24/C85, C32/C78, C69/C108, C97/C136, and C101/C125. 2 N-linked (GlcNAc...) asparagine glycosylation sites follow: N38 and N68. N-linked (GlcNAc...) asparagine glycans are attached at residues N116, N194, and N240. Residues 178 to 306 (CKCKKVKPTL…TIQDKKQIAS (129 aa)) form the NTR domain. Basic and acidic residues predominate over residues 293–303 (EQQRTIQDKKQ). The segment at 293–351 (EQQRTIQDKKQIASRTSRTSRSNPPKSKGRPPAPKPASPKKNIKARSAPKKSNLKKSAS) is disordered. Low complexity predominate over residues 306–318 (SRTSRTSRSNPPK). Residues 333-351 (KNIKARSAPKKSNLKKSAS) are compositionally biased toward basic residues.

Belongs to the secreted frizzled-related protein (sFRP) family. As to expression, expressed in the ovary. Localized to granulosa cells of periovulatory follicles and corpora lutea. Weakly expressed in adult tissues including kidney, brain and lung.

It is found in the secreted. In terms of biological role, soluble frizzled-related proteins (sFRPS) function as modulators of Wnt signaling through direct interaction with Wnts. They have a role in regulating cell growth and differentiation in specific cell types. SFRP4 plays a role in bone morphogenesis. May also act as a regulator of adult uterine morphology and function. May also increase apoptosis during ovulation possibly through modulation of FZ1/FZ4/WNT4 signaling. Has phosphaturic effects by specifically inhibiting sodium-dependent phosphate uptake. In Mus musculus (Mouse), this protein is Secreted frizzled-related sequence protein 4 (Sfrp4).